The chain runs to 76 residues: Putative defensin-like protein 62 (76 aa).

An N-terminal signal peptide occupies residues Met1 to Gln26. Cystine bridges form between Cys30/Cys71, Cys34/Cys57, Cys43/Cys69, and Cys47/Cys70.

This sequence belongs to the DEFL family.

It is found in the secreted. The sequence is that of Putative defensin-like protein 62 from Arabidopsis thaliana (Mouse-ear cress).